Consider the following 230-residue polypeptide: 7-cyano-7-deazaguanine synthase (230 aa).

16–26 serves as a coordination point for ATP; that stretch reads LSGGLDSMVSG. Zn(2+)-binding residues include Cys195, Cys205, Cys208, and Cys211.

It belongs to the QueC family. The cofactor is Zn(2+).

The catalysed reaction is 7-carboxy-7-deazaguanine + NH4(+) + ATP = 7-cyano-7-deazaguanine + ADP + phosphate + H2O + H(+). The protein operates within purine metabolism; 7-cyano-7-deazaguanine biosynthesis. In terms of biological role, catalyzes the ATP-dependent conversion of 7-carboxy-7-deazaguanine (CDG) to 7-cyano-7-deazaguanine (preQ(0)). In Rhizorhabdus wittichii (strain DSM 6014 / CCUG 31198 / JCM 15750 / NBRC 105917 / EY 4224 / RW1) (Sphingomonas wittichii), this protein is 7-cyano-7-deazaguanine synthase.